Here is a 153-residue protein sequence, read N- to C-terminus: Transcriptional repressor NrdR (153 aa).

Residues 3–34 (CPYCGYEDSKVIDTRPADEGRTIKRRRECLKC) fold into a zinc finger. The ATP-cone domain maps to 49–139 (ILVIKKDNRR…VYRQFKDINT (91 aa)).

It belongs to the NrdR family. Zn(2+) is required as a cofactor.

Its function is as follows. Negatively regulates transcription of bacterial ribonucleotide reductase nrd genes and operons by binding to NrdR-boxes. This is Transcriptional repressor NrdR from Caldicellulosiruptor saccharolyticus (strain ATCC 43494 / DSM 8903 / Tp8T 6331).